The following is a 223-amino-acid chain: MKGYRILIVEDDVMIGDLLQKILQREGYRVIWKTDGADVLSVIQKVDLVIMDVMLPGEDGYQMSAKIKKLGLGIPVIFLSARNDMDSKLQGLQIGEDYMVKPFDPRELLLRMRNMLEHHYGTFTQIKHLYIDAVTKKVFNESLHDEVLFTAIERKIFFYLYENRDSILTKEHFFEYLWQLEDRNPNIVNVHIKKIRAKINDQAGEMIENIYGEGYRLNTVVKK.

The Response regulatory domain occupies 5–116 (RILIVEDDVM…ELLLRMRNML (112 aa)). Asp52 is subject to 4-aspartylphosphate. A DNA-binding region (ompR/PhoB-type) is located at residues 121 to 219 (GTFTQIKHLY…IYGEGYRLNT (99 aa)).

In terms of processing, phosphorylated by YbdK.

Its subcellular location is the cytoplasm. In terms of biological role, member of the two-component regulatory system YbdK/YbdJ. This is an uncharacterized protein from Bacillus subtilis (strain 168).